Consider the following 340-residue polypeptide: Fructose-1,6-bisphosphatase, cytosolic (340 aa).

Mg(2+) is bound by residues E71, E100, D121, L123, and D124. Residues D124–S127, N215, Y247, Y267, and K277 each bind substrate. E283 contacts Mg(2+).

The protein belongs to the FBPase class 1 family. Requires Mg(2+) as cofactor.

It is found in the cytoplasm. The enzyme catalyses beta-D-fructose 1,6-bisphosphate + H2O = beta-D-fructose 6-phosphate + phosphate. The chain is Fructose-1,6-bisphosphatase, cytosolic from Solanum tuberosum (Potato).